A 169-amino-acid chain; its full sequence is Peptide deformylase (169 aa).

Residues C93 and H135 each contribute to the Fe cation site. E136 is an active-site residue. H139 is a binding site for Fe cation.

This sequence belongs to the polypeptide deformylase family. Fe(2+) is required as a cofactor.

The catalysed reaction is N-terminal N-formyl-L-methionyl-[peptide] + H2O = N-terminal L-methionyl-[peptide] + formate. Functionally, removes the formyl group from the N-terminal Met of newly synthesized proteins. Requires at least a dipeptide for an efficient rate of reaction. N-terminal L-methionine is a prerequisite for activity but the enzyme has broad specificity at other positions. The sequence is that of Peptide deformylase from Aquifex aeolicus (strain VF5).